A 294-amino-acid chain; its full sequence is Putative glucose-6-phosphate 1-epimerase (294 aa).

Substrate contacts are provided by Arg-74 and Arg-99. The active site involves His-164. A substrate-binding site is contributed by Asp-208. Glu-267 is a catalytic residue.

Belongs to the glucose-6-phosphate 1-epimerase family. As to quaternary structure, monomer in solution.

It catalyses the reaction alpha-D-glucose 6-phosphate = beta-D-glucose 6-phosphate. Probably functions as a hexose-6-phosphate 1-epimerase. The polypeptide is Putative glucose-6-phosphate 1-epimerase (Salmonella typhimurium (strain LT2 / SGSC1412 / ATCC 700720)).